Consider the following 145-residue polypeptide: MSLQSSIYRIIKFIIFLTINISIYANAKDIANLQITSNTLIIDRIKQKAEYSGNVIVYFDNAILRTQKLYIFYKTIGEKQVIDHIVVPSKLTVERKINNELLLADSAKYFFVDKQLILLGNVILQRNDHVLKTNKLIYYVEIVRK.

This is an uncharacterized protein from Rickettsia prowazekii (strain Madrid E).